The sequence spans 364 residues: Protein MGF 360-21R (364 aa).

It belongs to the asfivirus MGF 360 family.

Its function is as follows. Plays a role in virus cell tropism, and may be required for efficient virus replication in macrophages. The chain is Protein MGF 360-21R from African swine fever virus (isolate Pig/Kenya/KEN-50/1950) (ASFV).